Here is a 547-residue protein sequence, read N- to C-terminus: Varicidin biosynthesis cluster MFS-type transporer (547 aa).

A compositionally biased stretch (polar residues) spans 1-17 (MTTSTSKNAISKSSQED). A disordered region spans residues 1-33 (MTTSTSKNAISKSSQEDLCSDTKDKGSSGGGNE). The next 11 helical transmembrane spans lie at 47-67 (LVLL…VCIS), 156-176 (LAPS…SVFT), 183-203 (WCFW…FLFV), 224-244 (ALGT…LQWG), 252-272 (SWRV…WLYV), 296-316 (ILFT…VPIW), 330-350 (INFL…GTLV), 360-382 (GQWR…WRYN), 392-412 (AGTL…PFIA), 422-442 (ISLG…VFLA), and 503-523 (CFLV…GMEW).

It belongs to the major facilitator superfamily. TCR/Tet family.

The protein resides in the cell membrane. Its function is as follows. MFS-type transporer; part of the gene cluster that mediates the biosynthesis of varicidin A, an antifungal natural product containing a cis-octahydrodecalin core. The sequence is that of Varicidin biosynthesis cluster MFS-type transporer from Talaromyces variabilis (Penicillium variabile).